The following is a 574-amino-acid chain: 3-hydroxy-3-methylglutaryl-coenzyme A reductase 3 (574 aa).

Positions 1–30 (MDVRRRPVKPLYPSEHISSGEPLKPHNQDS) are disordered. A helical membrane pass occupies residues 41–61 (PLYLTNGLFFTMFFSVMYFLL). A glycan (N-linked (GlcNAc...) asparagine) is linked at Asn78. A helical transmembrane segment spans residues 83–103 (VAMVSLIASVIYLLGFFGIGF). The interval 104–161 (VQSFVSKGNNDSWDVEDESPEQFIDRTVTPPPVRRNIPMKSVPVAEKTAQIITPFSSE) is linker. Asn113 is a glycosylation site (N-linked (GlcNAc...) asparagine). The tract at residues 162-574 (DDEVVIKSVV…YNRSCKDVTK (413 aa)) is catalytic. The active-site Charge relay system is the Glu256. Asn320 carries N-linked (GlcNAc...) asparagine glycosylation. Catalysis depends on Lys388, which acts as the Charge relay system. The N-linked (GlcNAc...) asparagine glycan is linked to Asn433. The active-site Charge relay system is Asp464. Residue His562 is the Proton donor of the active site. N-linked (GlcNAc...) asparagine glycosylation occurs at Asn566.

Belongs to the HMG-CoA reductase family. In terms of tissue distribution, expressed in mature petals and anthers.

It is found in the endoplasmic reticulum membrane. The catalysed reaction is (R)-mevalonate + 2 NADP(+) + CoA = (3S)-3-hydroxy-3-methylglutaryl-CoA + 2 NADPH + 2 H(+). It functions in the pathway metabolic intermediate biosynthesis; (R)-mevalonate biosynthesis; (R)-mevalonate from acetyl-CoA: step 3/3. Catalyzes the synthesis of mevalonate. The specific precursor of all isoprenoid compounds present in plants. The polypeptide is 3-hydroxy-3-methylglutaryl-coenzyme A reductase 3 (HMG3) (Solanum tuberosum (Potato)).